The sequence spans 2323 residues: C2 domain-containing protein 3 (2323 aa).

Disordered stretches follow at residues 1-27 (MKQR…SPST), 193-215 (RELR…SCRG), 402-426 (WNGL…DLND), 444-509 (SDVG…HTPA), 537-556 (PDSP…PPKP), and 698-745 (KLSS…TKKT). Positions 200 to 209 (ESSNTQSMIP) are enriched in polar residues. The residue at position 453 (serine 453) is a Phosphoserine. Residues 474-483 (KVVESKEQKQ) show a composition bias toward basic and acidic residues. The C2 1 domain maps to 504–663 (PGHTPAMSLS…IQSELLSFSS (160 aa)). The span at 698 to 735 (KLSSSTQPAPVSAATSSDTILPETGQDTACTRNPQSSN) shows a compositional bias: polar residues. Serine 713 carries the post-translational modification Phosphoserine. C2 domains are found at residues 771–903 (SCNL…SRLL), 969–1131 (QPPV…YRED), 1155–1323 (SSGF…TGWY), and 1383–1517 (KEEE…TLTI). Basic and acidic residues predominate over residues 1550 to 1574 (EPARELDSMDCSSHSESEQHPRKSD). Disordered stretches follow at residues 1550-1599 (EPAR…NSAA) and 1798-1824 (LAHT…AARH). The span at 1584 to 1599 (LQTSPTSTQVHGNSAA) shows a compositional bias: polar residues. A C2 6 domain is found at 1598-1726 (AAAQVCPAQE…SGFQFICGWY (129 aa)). A Phosphoserine modification is found at serine 1871. Disordered regions lie at residues 1891–1918 (FSSQ…GRQD), 1952–2013 (ALTS…GGML), 2074–2163 (SEVL…SVGW), 2182–2231 (SEAF…EVST), and 2261–2323 (SHSP…TEET). Residues 1892 to 1904 (SSQSSPAVSQSQE) are compositionally biased toward low complexity. Polar residues-rich tracts occupy residues 1952–1965 (ALTS…SRAV) and 2074–2083 (SEVLSPQPTE). Low complexity predominate over residues 2110-2125 (AVSPQPAQGSPSQSGV). Residues 2147–2158 (PSLTFSEAQEGS) show a composition bias toward polar residues. Low complexity predominate over residues 2182–2197 (SEAFSSEFSDSSESFE). A compositionally biased stretch (basic and acidic residues) spans 2207–2216 (SKREDYKDSP). Polar residues predominate over residues 2222 to 2231 (QVPTGSEVST).

In terms of assembly, interacts with OFD1; OFD1 may act as a negative regulator of C2CD3. Associates with the BBSome complex. Interacts with IFT88, BBS4 and PCM1.

The protein localises to the cytoplasm. The protein resides in the cytoskeleton. It is found in the cilium basal body. Its subcellular location is the microtubule organizing center. It localises to the centrosome. The protein localises to the centriole. Functionally, component of the centrioles that acts as a positive regulator of centriole elongation. Promotes assembly of centriolar distal appendage, a structure at the distal end of the mother centriole that acts as an anchor of the cilium, and is required for recruitment of centriolar distal appendages proteins CEP83, SCLT1, CEP89, FBF1 and CEP164. Not required for centriolar satellite integrity or RAB8 activation. Required for primary cilium formation. Required for sonic hedgehog/SHH signaling and for proteolytic processing of GLI3. In Mus musculus (Mouse), this protein is C2 domain-containing protein 3 (C2cd3).